A 311-amino-acid chain; its full sequence is MSSYLDFEKSIKQIDDDIANARIKGDEHAVEILNKNLEKEVAKVYKNLNEYQRLQLARHPDRPYAIDYIRSFLMDAYEIHGDRAFRDDPAIVCYVGYIGGKKAMVIGEQKGRGTKNKLRRNFGMPHPEGYRKALRVAKLAEKFNLPILFLIDTPGAYPGVGAEERGQSEAIARNLFEFANLKVPTIAVVIGEGGSGGALAIGVADKLAMMKNSVFSVISPEGCAAILWNDPSKQEQATKAMKITADDLKNLKLIDDVIKEPINGAHRDKDGAAKELASYFVSKLEKLEKLSIDELVAKRIDKILSVGAYEE.

The CoA carboxyltransferase C-terminal domain occupies 36-286 (NLEKEVAKVY…ASYFVSKLEK (251 aa)).

This sequence belongs to the AccA family. Acetyl-CoA carboxylase is a heterohexamer composed of biotin carboxyl carrier protein (AccB), biotin carboxylase (AccC) and two subunits each of ACCase subunit alpha (AccA) and ACCase subunit beta (AccD).

It is found in the cytoplasm. It catalyses the reaction N(6)-carboxybiotinyl-L-lysyl-[protein] + acetyl-CoA = N(6)-biotinyl-L-lysyl-[protein] + malonyl-CoA. Its pathway is lipid metabolism; malonyl-CoA biosynthesis; malonyl-CoA from acetyl-CoA: step 1/1. In terms of biological role, component of the acetyl coenzyme A carboxylase (ACC) complex. First, biotin carboxylase catalyzes the carboxylation of biotin on its carrier protein (BCCP) and then the CO(2) group is transferred by the carboxyltransferase to acetyl-CoA to form malonyl-CoA. In Campylobacter curvus (strain 525.92), this protein is Acetyl-coenzyme A carboxylase carboxyl transferase subunit alpha.